The sequence spans 996 residues: Cilia- and flagella-associated protein 251 (996 aa).

WD repeat units follow at residues glycine 73 to threonine 114, proline 118 to leucine 164, glutamate 168 to asparagine 211, proline 219 to aspartate 258, lysine 282 to phenylalanine 319, serine 399 to serine 438, threonine 445 to serine 485, glutamine 494 to asparagine 533, isoleucine 547 to glutamine 593, glutamate 615 to cysteine 658, and alanine 719 to isoleucine 759. The disordered stretch occupies residues aspartate 971 to aspartate 996.

The protein resides in the cell projection. Its subcellular location is the cilium. Its function is as follows. As component of a spoke-associated complex, regulates ciliary mobility by mediating a stable and functional assembly of the radial spoke 3 (RS3). This Tetrahymena thermophila (strain SB210) protein is Cilia- and flagella-associated protein 251.